Here is a 147-residue protein sequence, read N- to C-terminus: Arginine vasopressin-induced protein 1 (147 aa).

2 disordered regions span residues 1–24 (MGTP…RGRK) and 104–147 (LANP…QIRH). A compositionally biased stretch (polar residues) spans 105 to 119 (ANPQSATETASSEQY). A compositionally biased stretch (basic residues) spans 121–134 (HSRKKSARIRRNWR). The span at 137–147 (GPTSYLHQIRH) shows a compositional bias: polar residues.

May be involved in MAP kinase activation, epithelial sodium channel (ENaC) down-regulation and cell cycling. The polypeptide is Arginine vasopressin-induced protein 1 (AVPI1) (Homo sapiens (Human)).